The chain runs to 617 residues: V-type proton ATPase catalytic subunit A (617 aa).

Residue 257-264 coordinates ATP; sequence GAFGCGKT.

Belongs to the ATPase alpha/beta chains family. V-ATPase is a heteromultimeric enzyme composed of a peripheral catalytic V1 complex (components A to H) attached to an integral membrane V0 proton pore complex (components: a, c, c', c'', d, e, f and VOA1).

It localises to the vacuole membrane. It catalyses the reaction ATP + H2O + 4 H(+)(in) = ADP + phosphate + 5 H(+)(out). Functionally, catalytic subunit of the V1 complex of vacuolar(H+)-ATPase (V-ATPase), a multisubunit enzyme composed of a peripheral complex (V1) that hydrolyzes ATP and a membrane integral complex (V0) that translocates protons. V-ATPase is responsible for acidifying and maintaining the pH of intracellular compartments. In Eremothecium gossypii (strain ATCC 10895 / CBS 109.51 / FGSC 9923 / NRRL Y-1056) (Yeast), this protein is V-type proton ATPase catalytic subunit A (VMA1).